A 231-amino-acid chain; its full sequence is 7-cyano-7-deazaguanine synthase (231 aa).

8 to 18 (FSGGQDSTTCL) lines the ATP pocket. Positions 188, 197, 200, and 203 each coordinate Zn(2+).

Belongs to the QueC family. The cofactor is Zn(2+).

The enzyme catalyses 7-carboxy-7-deazaguanine + NH4(+) + ATP = 7-cyano-7-deazaguanine + ADP + phosphate + H2O + H(+). The protein operates within purine metabolism; 7-cyano-7-deazaguanine biosynthesis. In terms of biological role, catalyzes the ATP-dependent conversion of 7-carboxy-7-deazaguanine (CDG) to 7-cyano-7-deazaguanine (preQ(0)). The sequence is that of 7-cyano-7-deazaguanine synthase from Salmonella arizonae (strain ATCC BAA-731 / CDC346-86 / RSK2980).